The primary structure comprises 449 residues: Uridine-cytidine kinase C (449 aa).

ATP is bound at residue 58–65; it reads GPSGAGKT. One can recognise a CYTH domain in the interval 235 to 401; that stretch reads NPIYILKSVK…QKSYIELYQD (167 aa).

It belongs to the uridine kinase family.

It carries out the reaction uridine + ATP = UMP + ADP + H(+). The enzyme catalyses cytidine + ATP = CMP + ADP + H(+). The protein operates within pyrimidine metabolism; CTP biosynthesis via salvage pathway; CTP from cytidine: step 1/3. Its pathway is pyrimidine metabolism; UMP biosynthesis via salvage pathway; UMP from uridine: step 1/1. Functionally, catalyzes the conversion of uridine into uridine monophosphate and cytidine into cytidine monophosphate in the pyrimidine salvage pathway. The protein is Uridine-cytidine kinase C (udkC) of Dictyostelium discoideum (Social amoeba).